We begin with the raw amino-acid sequence, 460 residues long: UDP-N-acetylmuramate--L-alanine ligase (460 aa).

Position 118-124 (118-124) interacts with ATP; it reads GAHGKTT.

The protein belongs to the MurCDEF family.

The protein localises to the cytoplasm. The enzyme catalyses UDP-N-acetyl-alpha-D-muramate + L-alanine + ATP = UDP-N-acetyl-alpha-D-muramoyl-L-alanine + ADP + phosphate + H(+). Its pathway is cell wall biogenesis; peptidoglycan biosynthesis. Functionally, cell wall formation. This Clostridium botulinum (strain Eklund 17B / Type B) protein is UDP-N-acetylmuramate--L-alanine ligase.